A 407-amino-acid polypeptide reads, in one-letter code: Tryptophan synthase beta chain (407 aa).

K98 bears the N6-(pyridoxal phosphate)lysine mark.

Belongs to the TrpB family. In terms of assembly, tetramer of two alpha and two beta chains. Pyridoxal 5'-phosphate is required as a cofactor.

It catalyses the reaction (1S,2R)-1-C-(indol-3-yl)glycerol 3-phosphate + L-serine = D-glyceraldehyde 3-phosphate + L-tryptophan + H2O. Its pathway is amino-acid biosynthesis; L-tryptophan biosynthesis; L-tryptophan from chorismate: step 5/5. Functionally, the beta subunit is responsible for the synthesis of L-tryptophan from indole and L-serine. In Bradyrhizobium sp. (strain BTAi1 / ATCC BAA-1182), this protein is Tryptophan synthase beta chain.